The following is a 268-amino-acid chain: Orotidine 5'-phosphate decarboxylase (268 aa).

Residues Asp-39, 61–63 (KTH), 93–102 (DRKFADIGNT), Tyr-219, and Arg-237 each bind substrate. Lys-95 serves as the catalytic Proton donor.

Belongs to the OMP decarboxylase family.

The catalysed reaction is orotidine 5'-phosphate + H(+) = UMP + CO2. It functions in the pathway pyrimidine metabolism; UMP biosynthesis via de novo pathway; UMP from orotate: step 2/2. The protein is Orotidine 5'-phosphate decarboxylase (URA3) of Pachysolen tannophilus (Yeast).